We begin with the raw amino-acid sequence, 897 residues long: Valine--tRNA ligase (897 aa).

The 'HIGH' region signature appears at 46-56 (PNVTGSLHMGH). The 'KMSKS' region signature appears at 532–536 (KMSKT). Residue Lys-535 participates in ATP binding. The stretch at 839–897 (LRRSLEKLDKESGVLAARLDNASYLANAPAELVTESRAKLAEQRAQAAILAEQLARLEN) forms a coiled coil.

Belongs to the class-I aminoacyl-tRNA synthetase family. ValS type 1 subfamily. As to quaternary structure, monomer.

Its subcellular location is the cytoplasm. It catalyses the reaction tRNA(Val) + L-valine + ATP = L-valyl-tRNA(Val) + AMP + diphosphate. Its function is as follows. Catalyzes the attachment of valine to tRNA(Val). As ValRS can inadvertently accommodate and process structurally similar amino acids such as threonine, to avoid such errors, it has a 'posttransfer' editing activity that hydrolyzes mischarged Thr-tRNA(Val) in a tRNA-dependent manner. In Gloeobacter violaceus (strain ATCC 29082 / PCC 7421), this protein is Valine--tRNA ligase.